Here is a 306-residue protein sequence, read N- to C-terminus: MAELIPLNEVGVAQPASGAVNRPRRPEWLKARAPGGVNYHDVLRLMREKNLHTVCEEARCPNIGECWNHRTATFLLLGDICTRGCRYCAIGKGKPKPIDENEPERVAESVAHLKLKFAVLTSVNRDDVPDGGAHIFARTIELIRQKVPDCKVEVLIPDFDGNWDALATVLAAEPDVLNHNIETVPRLFRRFRPRAKFEQSIELLARARAARPKLVTKSGMMVGAGETNEEVYEVIDRLRSVDVNVLTIGQYLAPDASYWPVHRYVTPAEFAEFRSYALARGFTHVESGPLVRSSYNAHLHVGAAQH.

Residues Cys-55, Cys-60, Cys-66, Cys-81, Cys-85, Cys-88, and Ser-294 each contribute to the [4Fe-4S] cluster site. Positions 67–283 (WNHRTATFLL…RSYALARGFT (217 aa)) constitute a Radical SAM core domain.

It belongs to the radical SAM superfamily. Lipoyl synthase family. The cofactor is [4Fe-4S] cluster.

The protein resides in the cytoplasm. It catalyses the reaction [[Fe-S] cluster scaffold protein carrying a second [4Fe-4S](2+) cluster] + N(6)-octanoyl-L-lysyl-[protein] + 2 oxidized [2Fe-2S]-[ferredoxin] + 2 S-adenosyl-L-methionine + 4 H(+) = [[Fe-S] cluster scaffold protein] + N(6)-[(R)-dihydrolipoyl]-L-lysyl-[protein] + 4 Fe(3+) + 2 hydrogen sulfide + 2 5'-deoxyadenosine + 2 L-methionine + 2 reduced [2Fe-2S]-[ferredoxin]. Its pathway is protein modification; protein lipoylation via endogenous pathway; protein N(6)-(lipoyl)lysine from octanoyl-[acyl-carrier-protein]: step 2/2. Its function is as follows. Catalyzes the radical-mediated insertion of two sulfur atoms into the C-6 and C-8 positions of the octanoyl moiety bound to the lipoyl domains of lipoate-dependent enzymes, thereby converting the octanoylated domains into lipoylated derivatives. This chain is Lipoyl synthase, found in Chloroflexus aurantiacus (strain ATCC 29364 / DSM 637 / Y-400-fl).